Consider the following 845-residue polypeptide: Protein P (845 aa).

A terminal protein domain (TP) region spans residues 1–179 (MPLSYQHFRK…FCGSPYSWEQ (179 aa)). The interval 180–348 (ELHHGRLVIK…YCLSHLVNLL (169 aa)) is spacer. Residues 349-692 (EDWGPCTEHG…YMNLYPVARQ (344 aa)) are polymerase/reverse transcriptase domain (RT). Residues 359 to 602 (EHHIRIPRTP…YSLNFMGYVI (244 aa)) form the Reverse transcriptase domain. Positions 431, 553, and 554 each coordinate Mg(2+).

It belongs to the hepadnaviridae P protein family.

It carries out the reaction DNA(n) + a 2'-deoxyribonucleoside 5'-triphosphate = DNA(n+1) + diphosphate. It catalyses the reaction Endonucleolytic cleavage to 5'-phosphomonoester.. Its activity is regulated as follows. Activated by host HSP70 and HSP40 in vitro to be able to bind the epsilon loop of the pgRNA. Because deletion of the RNase H region renders the protein partly chaperone-independent, the chaperones may be needed indirectly to relieve occlusion of the RNA-binding site by this domain. Inhibited by several reverse-transcriptase inhibitors: Lamivudine, Adefovir and Entecavir. Its function is as follows. Multifunctional enzyme that converts the viral RNA genome into dsDNA in viral cytoplasmic capsids. This enzyme displays a DNA polymerase activity that can copy either DNA or RNA templates, and a ribonuclease H (RNase H) activity that cleaves the RNA strand of RNA-DNA heteroduplexes in a partially processive 3'- to 5'-endonucleasic mode. Neo-synthesized pregenomic RNA (pgRNA) are encapsidated together with the P protein, and reverse-transcribed inside the nucleocapsid. Initiation of reverse-transcription occurs first by binding the epsilon loop on the pgRNA genome, and is initiated by protein priming, thereby the 5'-end of (-)DNA is covalently linked to P protein. Partial (+)DNA is synthesized from the (-)DNA template and generates the relaxed circular DNA (RC-DNA) genome. After budding and infection, the RC-DNA migrates in the nucleus, and is converted into a plasmid-like covalently closed circular DNA (cccDNA). The activity of P protein does not seem to be necessary for cccDNA generation, and is presumably released from (+)DNA by host nuclear DNA repair machinery. This chain is Protein P, found in Homo sapiens (Human).